A 260-amino-acid chain; its full sequence is tRNA (guanine-N(1)-)-methyltransferase (260 aa).

Residues Gly-117 and 137-142 contribute to the S-adenosyl-L-methionine site; that span reads LGDFVL.

This sequence belongs to the RNA methyltransferase TrmD family. As to quaternary structure, homodimer.

The protein localises to the cytoplasm. It carries out the reaction guanosine(37) in tRNA + S-adenosyl-L-methionine = N(1)-methylguanosine(37) in tRNA + S-adenosyl-L-homocysteine + H(+). Functionally, specifically methylates guanosine-37 in various tRNAs. This chain is tRNA (guanine-N(1)-)-methyltransferase, found in Cupriavidus metallidurans (strain ATCC 43123 / DSM 2839 / NBRC 102507 / CH34) (Ralstonia metallidurans).